Here is a 390-residue protein sequence, read N- to C-terminus: GTPase Obg (390 aa).

The Obg domain maps to 1-159 (MKFVDEASIL…RDLMLELMLL (159 aa)). Positions 127–147 (NTRFKSSVNRTPRQKTMGTPG) are disordered. Over residues 129 to 143 (RFKSSVNRTPRQKTM) the composition is skewed to polar residues. The OBG-type G domain occupies 160-333 (ADVGMLGMPN…LCWDVMTFII (174 aa)). Residues 166–173 (GMPNAGKS), 191–195 (FTTLV), 213–216 (DIPG), 283–286 (NKID), and 314–316 (SAA) contribute to the GTP site. Residues S173 and T193 each contribute to the Mg(2+) site.

Belongs to the TRAFAC class OBG-HflX-like GTPase superfamily. OBG GTPase family. In terms of assembly, monomer. Mg(2+) is required as a cofactor.

It is found in the cytoplasm. Functionally, an essential GTPase which binds GTP, GDP and possibly (p)ppGpp with moderate affinity, with high nucleotide exchange rates and a fairly low GTP hydrolysis rate. Plays a role in control of the cell cycle, stress response, ribosome biogenesis and in those bacteria that undergo differentiation, in morphogenesis control. The sequence is that of GTPase Obg from Citrobacter koseri (strain ATCC BAA-895 / CDC 4225-83 / SGSC4696).